The chain runs to 121 residues: Large ribosomal subunit protein bL12 (121 aa).

It belongs to the bacterial ribosomal protein bL12 family. As to quaternary structure, homodimer. Part of the ribosomal stalk of the 50S ribosomal subunit. Forms a multimeric L10(L12)X complex, where L10 forms an elongated spine to which 2 to 4 L12 dimers bind in a sequential fashion. Binds GTP-bound translation factors.

In terms of biological role, forms part of the ribosomal stalk which helps the ribosome interact with GTP-bound translation factors. Is thus essential for accurate translation. The chain is Large ribosomal subunit protein bL12 from Shewanella halifaxensis (strain HAW-EB4).